Reading from the N-terminus, the 319-residue chain is MKKSITTLDLNLLLCLQLLMQERSVTKAAKRMNVTPSAVSKSLAKLRAWFDDPLFVNSPLGLSPTPLMVSMEQNLAEWMQMSNLLLDKPHHQTPRGLKFELAAESPLMMIMLNALSKRIYQRYPQATIKLRNWDYDSLDAITRGEVDIGFSGRESHPRSRELLSSLPLAIDYEVLFSDVPCVWLRKDHPALHETWNLDTFLRYPHISICWEQSDTWALDNVLQELGRERTIAMSLPEFEQSLFMAAQPDNLLLATAPRYCQYYNQLHQLPLVALPLPFDESQQKKLEVPFTLLWHKRNSHNPKIVWLRETIKNLYASMA.

Residues 8–65 form the HTH lysR-type domain; sequence LDLNLLLCLQLLMQERSVTKAAKRMNVTPSAVSKSLAKLRAWFDDPLFVNSPLGLSPT. Residues 25–44 constitute a DNA-binding region (H-T-H motif); it reads VTKAAKRMNVTPSAVSKSLA.

This sequence belongs to the LysR transcriptional regulatory family.

Its function is as follows. Involved in anaerobic NO protection. This is HTH-type transcriptional regulator YidZ from Escherichia coli O139:H28 (strain E24377A / ETEC).